We begin with the raw amino-acid sequence, 146 residues long: Anti-sigma F factor (146 aa).

This sequence belongs to the anti-sigma-factor family.

The enzyme catalyses L-seryl-[protein] + ATP = O-phospho-L-seryl-[protein] + ADP + H(+). It carries out the reaction L-threonyl-[protein] + ATP = O-phospho-L-threonyl-[protein] + ADP + H(+). In terms of biological role, binds to sigma F and blocks its ability to form an RNA polymerase holoenzyme (E-sigma F). Phosphorylates SpoIIAA on a serine residue. This phosphorylation may enable SpoIIAA to act as an anti-anti-sigma factor that counteracts SpoIIAB and thus releases sigma F from inhibition. This is Anti-sigma F factor (spoIIAB) from Bacillus subtilis (strain 168).